The chain runs to 530 residues: Autoinducer-2 kinase (530 aa).

Belongs to the FGGY kinase family.

The protein localises to the cytoplasm. The enzyme catalyses (S)-4,5-dihydroxypentane-2,3-dione + ATP = (2S)-2-hydroxy-3,4-dioxopentyl phosphate + ADP + H(+). Functionally, catalyzes the phosphorylation of autoinducer-2 (AI-2) to phospho-AI-2, which subsequently inactivates the transcriptional regulator LsrR and leads to the transcription of the lsr operon. Phosphorylates the ring-open form of (S)-4,5-dihydroxypentane-2,3-dione (DPD), which is the precursor to all AI-2 signaling molecules, at the C5 position. This chain is Autoinducer-2 kinase, found in Salmonella paratyphi B (strain ATCC BAA-1250 / SPB7).